A 92-amino-acid polypeptide reads, in one-letter code: Mitochondrial import inner membrane translocase subunit tim8 (92 aa).

The Twin CX3C motif signature appears at 43–68; sequence CWKKCVTSPIKTNQLDKTEAVCMADC. Intrachain disulfides connect Cys43–Cys68 and Cys47–Cys64.

The protein belongs to the small Tim family. As to quaternary structure, heterohexamer; composed of 3 copies of tim8 and 3 copies of tim13, named soluble 70 kDa complex. Associates with the TIM22 complex, whose core is composed of tim22 and tim54. Interacts with the transmembrane regions of multi-pass transmembrane proteins in transit.

It localises to the mitochondrion inner membrane. Functionally, mitochondrial intermembrane chaperone that participates in the import and insertion of some multi-pass transmembrane proteins into the mitochondrial inner membrane. Also required for the transfer of beta-barrel precursors from the TOM complex to the sorting and assembly machinery (SAM complex) of the outer membrane. Acts as a chaperone-like protein that protects the hydrophobic precursors from aggregation and guide them through the mitochondrial intermembrane space. The tim8-tim13 complex is non essential and only mediates the import of few proteins, while the predominant tim9-tim10 70 kDa complex is crucial and mediates the import of much more proteins. The protein is Mitochondrial import inner membrane translocase subunit tim8 (tim8) of Neurospora crassa (strain ATCC 24698 / 74-OR23-1A / CBS 708.71 / DSM 1257 / FGSC 987).